Here is a 280-residue protein sequence, read N- to C-terminus: MKTLFEEIKASIKNNYNQDRSFWRPVLPWGGVFTIKAGRKAVSCTPLYVEIRLKNTCTIDGFLMLLYVILNENENFPRELSLHLGREFVDCFLYLMDTYSFTTVKLLWIWDKMEKQQYKSEVHKASLIIDLFGNEHDNFTKNLENLMSTIQESYCSNWRCPTRVQEDQQRTINIKCGGLREFSQRVFCHGAPPFVVLNMQHWKSEDLAYVPYYLDLSDHKYLLEGATLFNKEEHHYSAAFQIDGHWMHYDGLRNVNLILLNKPPEFLLLSSLVYIRATEK.

As to quaternary structure, interacts with DRD1, the dopamine D1 receptor.

Could be a regulator of the dopamine receptor signaling pathway. The protein is Dopamine receptor-interacting protein 1 (DORIP1) of Bos taurus (Bovine).